The sequence spans 164 residues: Protein-export protein SecB (164 aa).

Basic and acidic residues predominate over residues 1 to 12 (MPDKDEITHDAQ). Residues 1–22 (MPDKDEITHDAQSENEESLPLA) form a disordered region.

The protein belongs to the SecB family. Homotetramer, a dimer of dimers. One homotetramer interacts with 1 SecA dimer.

The protein resides in the cytoplasm. Functionally, one of the proteins required for the normal export of preproteins out of the cell cytoplasm. It is a molecular chaperone that binds to a subset of precursor proteins, maintaining them in a translocation-competent state. It also specifically binds to its receptor SecA. The protein is Protein-export protein SecB of Neorickettsia sennetsu (strain ATCC VR-367 / Miyayama) (Ehrlichia sennetsu).